We begin with the raw amino-acid sequence, 201 residues long: Recombination protein RecR (201 aa).

The segment at 58 to 73 (CEQCASITDTCPCRIC) adopts a C4-type zinc-finger fold. A Toprim domain is found at 81–178 (DKLCLVSEWD…ELSRLAQGIP (98 aa)).

Belongs to the RecR family.

In terms of biological role, may play a role in DNA repair. It seems to be involved in an RecBC-independent recombinational process of DNA repair. It may act with RecF and RecO. The protein is Recombination protein RecR of Maridesulfovibrio salexigens (strain ATCC 14822 / DSM 2638 / NCIMB 8403 / VKM B-1763) (Desulfovibrio salexigens).